Consider the following 101-residue polypeptide: Acylphosphatase (101 aa).

Residues 12-98 (RAHVFVTGRV…EGLRGFEVKR (87 aa)) form the Acylphosphatase-like domain. Active-site residues include R27 and N45.

It belongs to the acylphosphatase family.

The enzyme catalyses an acyl phosphate + H2O = a carboxylate + phosphate + H(+). This Nostoc sp. (strain PCC 7120 / SAG 25.82 / UTEX 2576) protein is Acylphosphatase (acyP).